Reading from the N-terminus, the 229-residue chain is Uracil-DNA glycosylase (229 aa).

The active-site Proton acceptor is D65.

It belongs to the uracil-DNA glycosylase (UDG) superfamily. UNG family.

The protein resides in the cytoplasm. It catalyses the reaction Hydrolyzes single-stranded DNA or mismatched double-stranded DNA and polynucleotides, releasing free uracil.. Its function is as follows. Excises uracil residues from the DNA which can arise as a result of misincorporation of dUMP residues by DNA polymerase or due to deamination of cytosine. The chain is Uracil-DNA glycosylase from Brevibacillus brevis (strain 47 / JCM 6285 / NBRC 100599).